The chain runs to 416 residues: MISVVVGMQFGDEGKGKITDYLCSNYDDVVRFNGGNNAGHTVVIDGKKIKFHLIPSGAMQAGTVVLGNGMVIDPLKLLDEIKQLKLAKDNIKIVISGRAGVVTELHRILDKKEEELRSNSSIGTTSQGIGPAYEDKYGRLSIKMYDLNSIKKIKDKLNQLIAMKGLLTGPVDIDRVSNELYSAGSELYEYIGDASEFLEDEYRLGKNILFEGAQGAMLDIDFGTYPFVTSSNTVAGSVSTGSGFSFRRVEDVIGVFKAYTTKVGSGIFPTEIGSDDLRIAGNEYGTTTGRPRRTGWLDLPILRYAAYLNDVNRLAITKLDILGKLNQIKVGTSYIIDGKDYERFPDKIDPESEITVNYETFETWGDISSRISGYLGSGYDALPYNMRKYIEFIEDSLNCSIDIISLGEDRKSTIVK.

GTP contacts are provided by residues 11-17 (GDEGKGK) and 39-41 (GHT). The active-site Proton acceptor is the Asp12. Mg(2+) contacts are provided by Asp12 and Gly39. Residues 12-15 (DEGK), 37-40 (NAGH), Thr125, Arg139, Gln214, Thr229, and Arg290 contribute to the IMP site. The active-site Proton donor is the His40. 286–292 (TTTGRPR) is a binding site for substrate. GTP-binding positions include Arg292, 318 to 320 (KLD), and 405 to 407 (SLG).

It belongs to the adenylosuccinate synthetase family. As to quaternary structure, homodimer. Requires Mg(2+) as cofactor.

It is found in the cytoplasm. The enzyme catalyses IMP + L-aspartate + GTP = N(6)-(1,2-dicarboxyethyl)-AMP + GDP + phosphate + 2 H(+). Its pathway is purine metabolism; AMP biosynthesis via de novo pathway; AMP from IMP: step 1/2. Functionally, plays an important role in the de novo pathway of purine nucleotide biosynthesis. Catalyzes the first committed step in the biosynthesis of AMP from IMP. The sequence is that of Adenylosuccinate synthetase from Picrophilus torridus (strain ATCC 700027 / DSM 9790 / JCM 10055 / NBRC 100828 / KAW 2/3).